The primary structure comprises 470 residues: MIDKKVIVIGAGLAGSEAAWQVANAGVPVKLVEMRPFKSTPAHHTGEFGELVCSNSFGALNPDRAAGLLQKELRIFKSLIIQTADKFAVPAGGALAVDRSKFSMALTEALSSHPLIEIERFEQLDLPRKEKITILATGPLTSDELSYKIQAFTGIDACHFFDAASPIIYGDSIDQEIVFKASRYDKGDPAYLNCPMDKNNYIHFRNQLIEGEQANLKDFEKESANFFEACLPIEEIARRGVDTMRFGPLKSIGLWNPKWGDLFDRENRLKKRPYAIVQLRKEDLEGKLLNMVGFQTNLKWSEQKRIFRMIPGLEKAEFVRFGVMHRNTFLESPNLLLPTLQFMKRNNLFAAGQITGTEGYAAAAAGGLLAGINASLLAKGKKTVSFPKESMIGSLINFISNKNQILSNQKKNKFQPMPASFGLVPELTKRIKDKRLRYKAYQERSTEALNDFKNKLDYCFEKDHLLSKIY.

10–15 contributes to the FAD binding site; it reads GAGLAG.

Belongs to the MnmG family. TrmFO subfamily. The cofactor is FAD.

It localises to the cytoplasm. It catalyses the reaction uridine(54) in tRNA + (6R)-5,10-methylene-5,6,7,8-tetrahydrofolate + NADH + H(+) = 5-methyluridine(54) in tRNA + (6S)-5,6,7,8-tetrahydrofolate + NAD(+). It carries out the reaction uridine(54) in tRNA + (6R)-5,10-methylene-5,6,7,8-tetrahydrofolate + NADPH + H(+) = 5-methyluridine(54) in tRNA + (6S)-5,6,7,8-tetrahydrofolate + NADP(+). Its function is as follows. Catalyzes the folate-dependent formation of 5-methyl-uridine at position 54 (M-5-U54) in all tRNAs. The chain is Methylenetetrahydrofolate--tRNA-(uracil-5-)-methyltransferase TrmFO from Prochlorococcus marinus (strain MIT 9215).